The chain runs to 218 residues: Monomethylamine corrinoid protein 2 (218 aa).

The B12-binding N-terminal domain occupies 1 to 91 (MTNTEIFNKL…ELEKTKVEGE (91 aa)). The 125-residue stretch at 94–218 (TGLAITFVAE…AAKVALNVMK (125 aa)) folds into the B12-binding domain. His-107 contributes to the methylcob(III)alamin binding site.

The protein belongs to the methylamine corrinoid protein family. Can form a complex with MtmB.

Its pathway is one-carbon metabolism; methanogenesis from methylamine. Acts as a methyl group carrier between MtmB and MtbA. The sequence is that of Monomethylamine corrinoid protein 2 (mtmC2) from Methanosarcina mazei (strain ATCC BAA-159 / DSM 3647 / Goe1 / Go1 / JCM 11833 / OCM 88) (Methanosarcina frisia).